We begin with the raw amino-acid sequence, 185 residues long: Protein GrpE (185 aa).

Residues 1 to 12 (MADEQLNEKDLN) are compositionally biased toward basic and acidic residues. Positions 1–22 (MADEQLNEKDLNVEETGAGNAA) are disordered.

This sequence belongs to the GrpE family. In terms of assembly, homodimer.

The protein localises to the cytoplasm. Functionally, participates actively in the response to hyperosmotic and heat shock by preventing the aggregation of stress-denatured proteins, in association with DnaK and GrpE. It is the nucleotide exchange factor for DnaK and may function as a thermosensor. Unfolded proteins bind initially to DnaJ; upon interaction with the DnaJ-bound protein, DnaK hydrolyzes its bound ATP, resulting in the formation of a stable complex. GrpE releases ADP from DnaK; ATP binding to DnaK triggers the release of the substrate protein, thus completing the reaction cycle. Several rounds of ATP-dependent interactions between DnaJ, DnaK and GrpE are required for fully efficient folding. The chain is Protein GrpE from Pseudomonas putida (strain ATCC 700007 / DSM 6899 / JCM 31910 / BCRC 17059 / LMG 24140 / F1).